Here is an 83-residue protein sequence, read N- to C-terminus: Small ribosomal subunit protein uS17 (83 aa).

This sequence belongs to the universal ribosomal protein uS17 family. As to quaternary structure, part of the 30S ribosomal subunit.

One of the primary rRNA binding proteins, it binds specifically to the 5'-end of 16S ribosomal RNA. This is Small ribosomal subunit protein uS17 from Campylobacter jejuni subsp. jejuni serotype O:6 (strain 81116 / NCTC 11828).